The following is a 344-amino-acid chain: RNA-binding protein squid (344 aa).

Residues Met1–Asp55 form a disordered region. Over residues Gly36–Ser49 the composition is skewed to polar residues. 2 consecutive RRM domains span residues Arg56–Ile138 and Gly136–Pro213. Residue Ser148 is modified to Phosphoserine. Disordered regions lie at residues Lys214 to Tyr238 and Gly301 to Tyr344. Residues Pro215–Tyr254 are M9-like motif. 2 stretches are compositionally biased toward gly residues: residues Gly222–Tyr238 and Gly301–Arg337. An M9 motif region spans residues Gly300–Gln338.

As to quaternary structure, interacts with bru1/Bruno; the interaction is direct but weak, and may play a role in regulation of grk mRNA localization and translation. In terms of assembly, interacts (probably via M9 and M9-like motifs) with Tnpo/Transportin; the interaction is direct and is involved in nuclear localization. Interacts with fs(1)K10 (via N-terminus); may be involved in localization of sqd in the oocyte during oogenesis. Interacts (via C-terminus) with Hrb27C; the interaction is RNA dependent. Does not interact with Tnpo/Transportin. Interacts with fs(1)K10 (via N-terminus); may be involved in localization of sqd in the oocyte during oogenesis. As to quaternary structure, interacts (probably via M9-like motif) with Tnpo/Transportin; the interaction is direct and is involved in nuclear localization. Interacts with fs(1)K10 (via N-terminus); may be involved in localization of sqd in the oocyte during oogenesis.

It is found in the nucleus. Its subcellular location is the cytoplasm. In terms of biological role, component of ribonucleosomes. Could be needed to organize a concentration gradient of a dorsalizing morphogen (Dm) originating in the germinal vesicle. At least one of the isoforms is essential in somatic tissues. Interacts with grk mRNA (via 3' UTR) and involved in its localization to the dorsal anterior region of the oocyte during dorsal-ventral axis determination; may function as a ribonuclear protein complex together with otu and Hrb27C. Required for polytene chromosome dispersal in nurse cells during oogenesis; nuclear isoforms play a greater role in this than cytoplasmic isoforms. Required nonredundantly with isoform A/sqdA for dorsoventral pattern determination during oogenesis. May be important in somatic tissues. Functionally, required nonredundantly with isoform B/SqdS for dorsoventral pattern determination during oogenesis. Its function is as follows. May lack a role in dorsoventral pattern determination during oogenesis. May be important in somatic tissues. The protein is RNA-binding protein squid of Drosophila melanogaster (Fruit fly).